We begin with the raw amino-acid sequence, 88 residues long: Small ribosomal subunit protein uS15c (88 aa).

The protein belongs to the universal ribosomal protein uS15 family. As to quaternary structure, part of the 30S ribosomal subunit.

It localises to the plastid. The protein resides in the chloroplast. In Arabidopsis thaliana (Mouse-ear cress), this protein is Small ribosomal subunit protein uS15c (rps15).